A 1124-amino-acid chain; its full sequence is SH3 and PX domain-containing protein 2A (1124 aa).

The 125-residue stretch at 4–128 folds into the PX domain; the sequence is YCVQDATVVD…RFFEARPEDV (125 aa). An SH3 1 domain is found at 166–225; the sequence is MILEQYVVVSNYKKQENSELSLQAGEVVDVIEKNESGWWFVSTSEEQGWVPATYLEAQNG. Thr256 bears the Phosphothreonine mark. Positions 266-325 constitute an SH3 2 domain; the sequence is SREEKYVTVQPYTSQSKDEIGFEKGVTVEVIRKNLEGWWYIRYLGKEGWAPASYLKKAKD. Phosphoserine is present on residues Ser405 and Ser420. Disordered regions lie at residues 414-443, 504-672, 692-830, and 886-952; these read QRAQISSPNLRTRPPPRRESSLGFQLPKPP, RKKP…KLKA, SVTI…PKKE, and YLVA…GKTS. The 60-residue stretch at 447-506 folds into the SH3 3 domain; sequence SVEVEYYTIAEFQSCISDGISFRGGQKAEVIDKNSGGWWYVQIGEKEGWAPASYIDKRKK. Phosphoserine is present on residues Ser546 and Ser566. Positions 575–585 are enriched in basic and acidic residues; it reads SGDRGSGDKHP. Position 592 is a phosphoserine (Ser592). Over residues 607–619 the composition is skewed to acidic residues; sequence SSEDVALEEETIY. Low complexity-rich tracts occupy residues 633 to 669 and 692 to 709; these read SARGSSGDSDSPGSSSLSLAVKNSPKSDSPKSSSLLK and SVTISTTCSSSSSSSSLS. Ser643 carries the phosphoserine modification. Residues 713–739 show a composition bias toward basic and acidic residues; sequence GDLKPRSASDAGIRDTPKVGTKKDPDV. Thr728 carries the phosphothreonine modification. Residues Ser764, Ser766, and Ser812 each carry the phosphoserine modification. Phosphothreonine is present on Thr822. Positions 833–892 constitute an SH3 4 domain; sequence GQGATYVTCSAYQKVQDSEISFPEGAEVHVLEKAESGWWYVRFGELEGWAPSHYLVAEEN. Residues 907–937 are a coiled coil; that stretch reads SSQNEGKSDSLEKIEKRVQALNTVNQSKRAT. Residues 912–924 show a composition bias toward basic and acidic residues; that stretch reads GKSDSLEKIEKRV. The segment covering 926-935 has biased composition (polar residues); sequence ALNTVNQSKR. Phosphoserine occurs at positions 993, 1007, 1008, and 1029. The segment at 1020 to 1050 is disordered; sequence KGRLAERAASQGSESPLLPTQRKGIPVSPVR. The SH3 5 domain maps to 1063-1124; the sequence is NLKDVYISIA…VPSNYLEKKN (62 aa).

Belongs to the SH3PXD2 family. As to quaternary structure, interacts with ADAM12, ADAM15 and ADAM19. Interacts with NOXO1. Interacts (via SH3 domains) with NOXA1; the interaction is direct. Interacts (via N-terminus) with CYBA. Interacts with FASLG. Interacts (via PX domain) with RAB40B (GTP-bound); interaction promotes invadopodia-mediated extracellular matrix degradation. Tyrosine phosphorylated by SRC. Phosphorylation plays a regulatory role in the protein localization. The intramolecular interaction of the PX domain with the third SH3 domain maintains the protein in the cytoplasm and phosphorylation disrupts this interaction, resulting in the redistribution of the protein from cytoplasm to the perimembrane region. Phosphorylated on serine upon DNA damage, probably by ATM or ATR. In terms of tissue distribution, widely expressed. Not found in the spleen and testis.

It localises to the cytoplasm. It is found in the cell projection. The protein resides in the podosome. Its function is as follows. Adapter protein involved in invadopodia and podosome formation, extracellular matrix degradation and invasiveness of some cancer cells. Binds matrix metalloproteinases (ADAMs), NADPH oxidases (NOXs) and phosphoinositides. Acts as an organizer protein that allows NOX1- or NOX3-dependent reactive oxygen species (ROS) generation and ROS localization. In association with ADAM12, mediates the neurotoxic effect of amyloid-beta peptide. This chain is SH3 and PX domain-containing protein 2A, found in Mus musculus (Mouse).